We begin with the raw amino-acid sequence, 431 residues long: 3-phosphoshikimate 1-carboxyvinyltransferase (431 aa).

The 3-phosphoshikimate site is built by Lys21, Ser22, and Arg26. Lys21 serves as a coordination point for phosphoenolpyruvate. Gly94 and Arg122 together coordinate phosphoenolpyruvate. The 3-phosphoshikimate site is built by Ser167, Gln169, Asp315, and Lys342. Gln169 lines the phosphoenolpyruvate pocket. Asp315 (proton acceptor) is an active-site residue. The phosphoenolpyruvate site is built by Arg346 and Arg388.

Belongs to the EPSP synthase family. In terms of assembly, monomer.

It is found in the cytoplasm. It catalyses the reaction 3-phosphoshikimate + phosphoenolpyruvate = 5-O-(1-carboxyvinyl)-3-phosphoshikimate + phosphate. Its pathway is metabolic intermediate biosynthesis; chorismate biosynthesis; chorismate from D-erythrose 4-phosphate and phosphoenolpyruvate: step 6/7. Catalyzes the transfer of the enolpyruvyl moiety of phosphoenolpyruvate (PEP) to the 5-hydroxyl of shikimate-3-phosphate (S3P) to produce enolpyruvyl shikimate-3-phosphate and inorganic phosphate. The chain is 3-phosphoshikimate 1-carboxyvinyltransferase from Pelotomaculum thermopropionicum (strain DSM 13744 / JCM 10971 / SI).